Reading from the N-terminus, the 65-residue chain is Defensin-B3 (65 aa).

An N-terminal signal peptide occupies residues 1-21; it reads MRLLLVFFFLSLLDQAPPARS. 3 disulfide bridges follow: Cys-29/Cys-58, Cys-36/Cys-50, and Cys-40/Cys-59. Positions 62–65 are excised as a propeptide; that stretch reads ESPR.

It belongs to the beta-defensin family. As to expression, lowly expressed in spleen, and expressed at lower levels in kidney, lung and testis.

It localises to the secreted. Its function is as follows. Has antimicrobial activity. The sequence is that of Defensin-B3 from Ornithorhynchus anatinus (Duckbill platypus).